A 515-amino-acid polypeptide reads, in one-letter code: Galactose/methyl galactoside import ATP-binding protein MglA (515 aa).

ABC transporter domains lie at 8 to 243 and 254 to 499; these read LEMR…VGRE and IPKE…AKYL. 40–47 is an ATP binding site; it reads GENGAGKS.

This sequence belongs to the ABC transporter superfamily. Galactose/methyl galactoside importer (TC 3.A.1.2.3) family. The complex is composed of one ATP-binding protein (MglA), two transmembrane proteins (MglC) and a solute-binding protein (MglB).

Its subcellular location is the cell membrane. It catalyses the reaction D-galactose(out) + ATP + H2O = D-galactose(in) + ADP + phosphate + H(+). The catalysed reaction is methyl beta-D-galactoside(out) + ATP + H2O = methyl beta-D-galactoside(in) + ADP + phosphate + H(+). Functionally, part of the ABC transporter complex MglABC involved in galactose/methyl galactoside import. Responsible for energy coupling to the transport system. In Clostridium perfringens (strain 13 / Type A), this protein is Galactose/methyl galactoside import ATP-binding protein MglA.